Here is a 95-residue protein sequence, read N- to C-terminus: Hiracin-JM79 immunity factor (95 aa).

Imparts immunity to bacteriocin hiracin-JM79 to naturally sensitive host strains. The sequence is that of Hiracin-JM79 immunity factor from Enterococcus hirae.